The chain runs to 177 residues: MSRIGKKPVQVPAGITATVDGQKVTAKGPKGELFFVANDEISLKLENNAVVVTPVNQTKDARSKWGMSRTMIEGIFKGVKDGFERKLEINGVGYRASLQGKNLQLALGFSHDVLYEPPVGITIAVPKPTEIVVSGINKQQVGQVAAEIREYRGPEPYKGKGVKYADERIVRKEGKKK.

This sequence belongs to the universal ribosomal protein uL6 family. Part of the 50S ribosomal subunit.

Functionally, this protein binds to the 23S rRNA, and is important in its secondary structure. It is located near the subunit interface in the base of the L7/L12 stalk, and near the tRNA binding site of the peptidyltransferase center. The polypeptide is Large ribosomal subunit protein uL6 (Rhizobium leguminosarum bv. trifolii (strain WSM2304)).